Reading from the N-terminus, the 144-residue chain is Large ribosomal subunit protein uL15 (144 aa).

Residues 1–57 are disordered; the sequence is MLLNTLSPAAGSKHAPKRLGRGVGSGLGKTGGRGHKGQKSRSGGKVRPGFEGGQMPL. A compositionally biased stretch (gly residues) spans 21–31; it reads RGVGSGLGKTG. Residues 32–44 show a composition bias toward basic residues; the sequence is GRGHKGQKSRSGG.

The protein belongs to the universal ribosomal protein uL15 family. In terms of assembly, part of the 50S ribosomal subunit.

Functionally, binds to the 23S rRNA. This Vibrio cholerae serotype O1 (strain ATCC 39315 / El Tor Inaba N16961) protein is Large ribosomal subunit protein uL15.